We begin with the raw amino-acid sequence, 28 residues long: Venom protein (28 aa).

The interval 1–28 (KEGYPDGQNGKKIPCAINDNISKTXEQA) is disordered. Residues 19–28 (DNISKTXEQA) show a composition bias toward polar residues.

Expressed by the venom gland.

It is found in the secreted. Functionally, causes symptoms of mild intoxication and transient paralysis in insects (A.domestica). This Rhopalurus junceus (Caribbean blue scorpion) protein is Venom protein.